The primary structure comprises 115 residues: SPbeta prophage-derived uncharacterized membrane protein YosE (115 aa).

Helical transmembrane passes span 20–42 (IVVG…YGLN), 58–78 (VHVT…FVKG), and 95–115 (GKSL…TLFI).

It is found in the cell membrane. The sequence is that of SPbeta prophage-derived uncharacterized membrane protein YosE (yosE) from Bacillus subtilis (strain 168).